The sequence spans 414 residues: Esterase FrsA (414 aa).

It belongs to the FrsA family.

It catalyses the reaction a carboxylic ester + H2O = an alcohol + a carboxylate + H(+). Catalyzes the hydrolysis of esters. The protein is Esterase FrsA of Escherichia coli O139:H28 (strain E24377A / ETEC).